Here is a 645-residue protein sequence, read N- to C-terminus: ATP-dependent zinc metalloprotease FtsH (645 aa).

Over Met-1 to Lys-6 the chain is Cytoplasmic. The helical transmembrane segment at Phe-7–Leu-27 threads the bilayer. The Periplasmic portion of the chain corresponds to Tyr-28–Leu-110. The chain crosses the membrane as a helical span at residues Phe-111–Phe-131. Topologically, residues Ala-132–Asn-645 are cytoplasmic. Gly-204–Thr-211 lines the ATP pocket. Position 426 (His-426) interacts with Zn(2+). Residue Glu-427 is part of the active site. The Zn(2+) site is built by His-430 and Asp-503. Residues Ser-623 to Asn-645 form a disordered region. Residues Glu-634–Asn-645 show a composition bias toward basic and acidic residues.

The protein in the central section; belongs to the AAA ATPase family. It in the C-terminal section; belongs to the peptidase M41 family. Homohexamer. Zn(2+) is required as a cofactor.

The protein resides in the cell inner membrane. In terms of biological role, acts as a processive, ATP-dependent zinc metallopeptidase for both cytoplasmic and membrane proteins. Plays a role in the quality control of integral membrane proteins. In Kosmotoga olearia (strain ATCC BAA-1733 / DSM 21960 / TBF 19.5.1), this protein is ATP-dependent zinc metalloprotease FtsH.